The sequence spans 245 residues: 2,3-bisphosphoglycerate-dependent phosphoglycerate mutase (245 aa).

Substrate-binding positions include arginine 8–asparagine 15, threonine 21–glycine 22, arginine 60, glutamate 87–tyrosine 90, lysine 98, arginine 114–arginine 115, and glycine 183–asparagine 184. Catalysis depends on histidine 9, which acts as the Tele-phosphohistidine intermediate. Residue glutamate 87 is the Proton donor/acceptor of the active site.

It belongs to the phosphoglycerate mutase family. BPG-dependent PGAM subfamily.

The enzyme catalyses (2R)-2-phosphoglycerate = (2R)-3-phosphoglycerate. Its pathway is carbohydrate degradation; glycolysis; pyruvate from D-glyceraldehyde 3-phosphate: step 3/5. Its function is as follows. Catalyzes the interconversion of 2-phosphoglycerate and 3-phosphoglycerate. The sequence is that of 2,3-bisphosphoglycerate-dependent phosphoglycerate mutase from Bacillus cereus (strain AH187).